The sequence spans 437 residues: GTPase Era, mitochondrial (437 aa).

Residues 1–20 constitute a mitochondrion transit peptide; it reads MAAPRRYFPGIVRALLGAWQ. The region spanning 112–330 is the Era-type G domain; sequence RVLRVVLLGA…QYLLTQAQPG (219 aa). A G1 region spans residues 120-127; sequence GAPNAGKS. Residue 120–127 participates in GTP binding; the sequence is GAPNAGKS. Positions 146-150 are G2; sequence HTTRC. Residues 167-170 are G3; sequence DTPG. 167 to 171 contacts GTP; that stretch reads DTPGI. Residue Ser-173 is modified to Phosphoserine. A GTP-binding site is contributed by 236–239; sequence NKVD. Residues 236-239 are G4; it reads NKVD. The disordered stretch occupies residues 272–293; the sequence is SRPSTHCPGPETEDPNTHAVRS. Residues 308-310 are G5; that stretch reads LSA. Residues 360–437 enclose the KH type-2 domain; it reads LPEEVPYSVQ…LLRLSVKLLK (78 aa).

This sequence belongs to the TRAFAC class TrmE-Era-EngA-EngB-Septin-like GTPase superfamily. Era GTPase family.

The protein localises to the mitochondrion matrix. It localises to the mitochondrion inner membrane. In terms of biological role, probable GTPase that plays a role in the mitochondrial ribosomal small subunit assembly. Specifically binds the 12S mitochondrial rRNA (12S mt-rRNA) to a 33 nucleotide section delineating the 3' terminal stem-loop region. May act as a chaperone that protects the 12S mt-rRNA on the 28S mitoribosomal subunit during ribosomal small subunit assembly. The chain is GTPase Era, mitochondrial (Eral1) from Rattus norvegicus (Rat).